The following is a 203-amino-acid chain: Inosine triphosphate pyrophosphatase (203 aa).

ITP is bound at residue 13 to 18 (TGNAKK). E43 serves as a coordination point for Mg(2+). ITP-binding positions include K55, 71–72 (DT), K88, 147–150 (FGWD), K170, and 175–176 (HR).

Belongs to the HAM1 NTPase family. As to quaternary structure, homodimer. Requires Mg(2+) as cofactor. The cofactor is Mn(2+).

Its subcellular location is the cytoplasm. The catalysed reaction is ITP + H2O = IMP + diphosphate + H(+). It catalyses the reaction dITP + H2O = dIMP + diphosphate + H(+). It carries out the reaction XTP + H2O = XMP + diphosphate + H(+). The enzyme catalyses N(6)-hydroxy-dATP + H2O = N(6)-hydroxy-dAMP + diphosphate + H(+). Pyrophosphatase that hydrolyzes the non-canonical purine nucleotides inosine triphosphate (ITP), deoxyinosine triphosphate (dITP) as well as 2'-deoxy-N-6-hydroxylaminopurine triphosphate (dHAPTP) and xanthosine 5'-triphosphate (XTP) to their respective monophosphate derivatives. The enzyme does not distinguish between the deoxy- and ribose forms. Probably excludes non-canonical purines from RNA and DNA precursor pools, thus preventing their incorporation into RNA and DNA and avoiding chromosomal lesions. The protein is Inosine triphosphate pyrophosphatase (itpa) of Danio rerio (Zebrafish).